Reading from the N-terminus, the 224-residue chain is 7-cyano-7-deazaguanine synthase (224 aa).

An ATP-binding site is contributed by 10 to 20 (LSGGLDSATVV). Residues Cys189, Cys199, Cys202, and Cys205 each contribute to the Zn(2+) site.

This sequence belongs to the QueC family. Zn(2+) serves as cofactor.

The catalysed reaction is 7-carboxy-7-deazaguanine + NH4(+) + ATP = 7-cyano-7-deazaguanine + ADP + phosphate + H2O + H(+). The protein operates within purine metabolism; 7-cyano-7-deazaguanine biosynthesis. Its function is as follows. Catalyzes the ATP-dependent conversion of 7-carboxy-7-deazaguanine (CDG) to 7-cyano-7-deazaguanine (preQ(0)). In Ectopseudomonas mendocina (strain ymp) (Pseudomonas mendocina), this protein is 7-cyano-7-deazaguanine synthase.